Reading from the N-terminus, the 436-residue chain is GTPase Der (436 aa).

2 EngA-type G domains span residues 4-167 (PVVA…KNIP) and 176-351 (VQFC…ENHS). GTP is bound by residues 10–17 (GRPNVGKS), 57–61 (DTGGI), 119–122 (NKVD), 182–189 (GRPNVGKS), 229–233 (DTAGM), and 294–297 (NKWD). Residues 352–436 (MRVQTNILND…PIRIFARARK (85 aa)) form the KH-like domain.

The protein belongs to the TRAFAC class TrmE-Era-EngA-EngB-Septin-like GTPase superfamily. EngA (Der) GTPase family. In terms of assembly, associates with the 50S ribosomal subunit.

GTPase that plays an essential role in the late steps of ribosome biogenesis. The sequence is that of GTPase Der from Bacillus licheniformis (strain ATCC 14580 / DSM 13 / JCM 2505 / CCUG 7422 / NBRC 12200 / NCIMB 9375 / NCTC 10341 / NRRL NRS-1264 / Gibson 46).